A 334-amino-acid polypeptide reads, in one-letter code: Protein U17/U16 (334 aa).

The protein belongs to the herpesviridae US22 family. In terms of processing, isoform 1 is not glycosylated.

Its function is as follows. Isoform 3 can transactivate the human immunodeficiency virus type 1 promoter. This Homo sapiens (Human) protein is Protein U17/U16 (U17/U16).